Reading from the N-terminus, the 202-residue chain is Holliday junction branch migration complex subunit RuvA (202 aa).

The interval 1–63 (MIAFLSGRVV…EDSLTLFGFA (63 aa)) is domain I. A domain II region spans residues 64–142 (DDDERDTFER…EPGGDTAATP (79 aa)). Residues 143-152 (EQSAAAAPRN) form a flexible linker region. Positions 152–202 (NWRAQVVSGLVNLGWSTREAEAAADAVAAEAGEQPDVAALLRSALRRLSRA) are domain III.

The protein belongs to the RuvA family. Homotetramer. Forms an RuvA(8)-RuvB(12)-Holliday junction (HJ) complex. HJ DNA is sandwiched between 2 RuvA tetramers; dsDNA enters through RuvA and exits via RuvB. An RuvB hexamer assembles on each DNA strand where it exits the tetramer. Each RuvB hexamer is contacted by two RuvA subunits (via domain III) on 2 adjacent RuvB subunits; this complex drives branch migration. In the full resolvosome a probable DNA-RuvA(4)-RuvB(12)-RuvC(2) complex forms which resolves the HJ.

It localises to the cytoplasm. The RuvA-RuvB-RuvC complex processes Holliday junction (HJ) DNA during genetic recombination and DNA repair, while the RuvA-RuvB complex plays an important role in the rescue of blocked DNA replication forks via replication fork reversal (RFR). RuvA specifically binds to HJ cruciform DNA, conferring on it an open structure. The RuvB hexamer acts as an ATP-dependent pump, pulling dsDNA into and through the RuvAB complex. HJ branch migration allows RuvC to scan DNA until it finds its consensus sequence, where it cleaves and resolves the cruciform DNA. In Thermobifida fusca (strain YX), this protein is Holliday junction branch migration complex subunit RuvA.